Consider the following 819-residue polypeptide: Protein O-mannosyl-transferase tmem260 (819 aa).

The segment covering methionine 1–threonine 10 has biased composition (polar residues). The disordered stretch occupies residues methionine 1 to asparagine 68. The span at asparagine 15–asparagine 68 shows a compositional bias: low complexity. Residues asparagine 18, asparagine 38, and asparagine 70 are each glycosylated (N-linked (GlcNAc...) asparagine). 7 helical membrane passes run isoleucine 113 to proline 133, valine 152 to isoleucine 172, phenylalanine 185 to tryptophan 205, tryptophan 210 to isoleucine 230, glycine 232 to tyrosine 252, leucine 285 to isoleucine 305, and isoleucine 316 to isoleucine 336. N-linked (GlcNAc...) asparagine glycosylation occurs at asparagine 349. 4 helical membrane passes run leucine 391–leucine 411, methionine 427–isoleucine 447, phenylalanine 459–phenylalanine 479, and tyrosine 505–leucine 525. Asparagine 531, asparagine 686, asparagine 693, and asparagine 783 each carry an N-linked (GlcNAc...) asparagine glycan.

Belongs to the glycosyltransferase 117 (GT117) family.

The protein localises to the endoplasmic reticulum membrane. The enzyme catalyses a di-trans,poly-cis-dolichyl beta-D-mannosyl phosphate + L-seryl-[protein] = 3-O-(alpha-D-mannosyl)-L-seryl-[protein] + a di-trans,poly-cis-dolichyl phosphate + H(+). The catalysed reaction is a di-trans,poly-cis-dolichyl beta-D-mannosyl phosphate + L-threonyl-[protein] = 3-O-(alpha-D-mannosyl)-L-threonyl-[protein] + a di-trans,poly-cis-dolichyl phosphate + H(+). O-mannosyl-transferase that transfers mannosyl residues to the hydroxyl group of serine or threonine residues of proteins. This is Protein O-mannosyl-transferase tmem260 from Dictyostelium discoideum (Social amoeba).